Consider the following 473-residue polypeptide: Serine palmitoyltransferase 1 (473 aa).

The Lumenal portion of the chain corresponds to 1–15 (MAMAAEQWVLVEMVQ). The interaction with SPTLC2 stretch occupies residues 1–66 (MAMAAEQWVL…KEELIEEWQP (66 aa)). A helical transmembrane segment spans residues 16–36 (ALYEAPAYHLILEGILILWII). Topologically, residues 37 to 473 (RLVFSKTYKL…IREAAQAVLL (437 aa)) are cytoplasmic. The residue at position 164 (Tyr164) is a Phosphotyrosine; by ABL.

The protein belongs to the class-II pyridoxal-phosphate-dependent aminotransferase family. As to quaternary structure, component of the serine palmitoyltransferase (SPT) complex, which is also composed of SPTLC2 or SPTLC3 and SPTSSA or SPTSSB. The heterodimer with SPTLC2 or SPTLC3 forms the catalytic core of the enzyme, while SPTSSA or SPTSSB subunits determine substrate specificity. SPT also interacts with ORMDL proteins, especially ORMDL3, which negatively regulate SPT activity in the presence of ceramides. Forms dimers of heterodimers with SPTLC2. Interacts with RTN4. Pyridoxal 5'-phosphate serves as cofactor. In terms of processing, phosphorylation at Tyr-164 inhibits activity and promotes cell survival.

The protein localises to the endoplasmic reticulum membrane. It catalyses the reaction L-serine + hexadecanoyl-CoA + H(+) = 3-oxosphinganine + CO2 + CoA. The enzyme catalyses octadecanoyl-CoA + L-serine + H(+) = 3-oxoeicosasphinganine + CO2 + CoA. The catalysed reaction is tetradecanoyl-CoA + L-serine + H(+) = 3-oxohexadecasphinganine + CO2 + CoA. It carries out the reaction dodecanoyl-CoA + L-serine + H(+) = 3-oxotetradecasphinganine + CO2 + CoA. The protein operates within lipid metabolism; sphingolipid metabolism. With respect to regulation, SPT complex catalytic activity is negatively regulated by ORMDL proteins, including ORMDL3, in the presence of ceramides. This mechanism allows to maintain ceramide levels at sufficient concentrations for the production of complex sphingolipids, but which prevents the accumulation of ceramides to levels that trigger apoptosis. Functionally, component of the serine palmitoyltransferase multisubunit enzyme (SPT) that catalyzes the initial and rate-limiting step in sphingolipid biosynthesis by condensing L-serine and activated acyl-CoA (most commonly palmitoyl-CoA) to form long-chain bases. The SPT complex is also composed of SPTLC2 or SPTLC3 and SPTSSA or SPTSSB. Within this complex, the heterodimer with SPTLC2 or SPTLC3 forms the catalytic core. The composition of the serine palmitoyltransferase (SPT) complex determines the substrate preference. The SPTLC1-SPTLC2-SPTSSA complex shows a strong preference for C16-CoA substrate, while the SPTLC1-SPTLC3-SPTSSA isozyme uses both C14-CoA and C16-CoA as substrates, with a slight preference for C14-CoA. The SPTLC1-SPTLC2-SPTSSB complex shows a strong preference for C18-CoA substrate, while the SPTLC1-SPTLC3-SPTSSB isozyme displays an ability to use a broader range of acyl-CoAs, without apparent preference. Required for adipocyte cell viability and metabolic homeostasis. This is Serine palmitoyltransferase 1 (SPTLC1) from Cricetulus griseus (Chinese hamster).